Consider the following 364-residue polypeptide: D-alanine--D-alanine ligase (364 aa).

Positions 146–352 (KLCAMNAGIA…FAELVEKLLL (207 aa)) constitute an ATP-grasp domain. 179-234 (TKRFDWPLFVKPASLGSSVGISKVRNAEELAAALENACGLDSKALVEAAISGREIE) is an ATP binding site. 3 residues coordinate Mg(2+): Asp305, Glu319, and Asn321.

This sequence belongs to the D-alanine--D-alanine ligase family. Mg(2+) serves as cofactor. Requires Mn(2+) as cofactor.

Its subcellular location is the cytoplasm. It carries out the reaction 2 D-alanine + ATP = D-alanyl-D-alanine + ADP + phosphate + H(+). It functions in the pathway cell wall biogenesis; peptidoglycan biosynthesis. In terms of biological role, cell wall formation. This Chlorobaculum tepidum (strain ATCC 49652 / DSM 12025 / NBRC 103806 / TLS) (Chlorobium tepidum) protein is D-alanine--D-alanine ligase.